Here is a 448-residue protein sequence, read N- to C-terminus: Argininosuccinate synthase (448 aa).

Residues 17-25 (AFSGGLDTS) and A43 each bind ATP. Y99 provides a ligand contact to L-citrulline. Residues G129 and T131 each coordinate ATP. Residues T131, N135, and D136 each contribute to the L-aspartate site. N135 is an L-citrulline binding site. D136 contacts ATP. L-citrulline-binding residues include R139 and S192. Position 194 (D194) interacts with ATP. Residues T201, E203, and E280 each contribute to the L-citrulline site.

The protein belongs to the argininosuccinate synthase family. Type 2 subfamily. As to quaternary structure, homotetramer.

Its subcellular location is the cytoplasm. It catalyses the reaction L-citrulline + L-aspartate + ATP = 2-(N(omega)-L-arginino)succinate + AMP + diphosphate + H(+). It functions in the pathway amino-acid biosynthesis; L-arginine biosynthesis; L-arginine from L-ornithine and carbamoyl phosphate: step 2/3. The polypeptide is Argininosuccinate synthase (Pectobacterium atrosepticum (strain SCRI 1043 / ATCC BAA-672) (Erwinia carotovora subsp. atroseptica)).